The sequence spans 158 residues: Transcriptional repressor NrdR (158 aa).

Positions Met1 to Asn22 are disordered. A zinc finger spans residues Cys3 to Cys34. Residues Thr11–Asn22 are compositionally biased toward basic and acidic residues. An ATP-cone domain is found at Leu49 to Asp139.

It belongs to the NrdR family. Requires Zn(2+) as cofactor.

Its function is as follows. Negatively regulates transcription of bacterial ribonucleotide reductase nrd genes and operons by binding to NrdR-boxes. The sequence is that of Transcriptional repressor NrdR from Allorhizobium ampelinum (strain ATCC BAA-846 / DSM 112012 / S4) (Agrobacterium vitis (strain S4)).